The primary structure comprises 166 residues: NADH-ubiquinone oxidoreductase chain 6 (166 aa).

Helical transmembrane passes span 1 to 21, 26 to 46, 47 to 67, 87 to 107, and 139 to 159; these read MMYFVYLLSILLVLGFMAFAS, IYGGLSLVLSGGVGCGIVVSL, GGSFLGLIVFLVYLGGMLVVF, VFTNLLIMVGMLGVIWYYFSG, and CGGWELIFSGWILFLTIFVVL.

The protein belongs to the complex I subunit 6 family. In terms of assembly, core subunit of respiratory chain NADH dehydrogenase (Complex I) which is composed of 45 different subunits.

It is found in the mitochondrion inner membrane. The catalysed reaction is a ubiquinone + NADH + 5 H(+)(in) = a ubiquinol + NAD(+) + 4 H(+)(out). Functionally, core subunit of the mitochondrial membrane respiratory chain NADH dehydrogenase (Complex I) which catalyzes electron transfer from NADH through the respiratory chain, using ubiquinone as an electron acceptor. Essential for the catalytic activity and assembly of complex I. The polypeptide is NADH-ubiquinone oxidoreductase chain 6 (MT-ND6) (Ornithorhynchus anatinus (Duckbill platypus)).